Consider the following 105-residue polypeptide: Putative membrane protein insertion efficiency factor (105 aa).

This sequence belongs to the UPF0161 family.

It is found in the cell inner membrane. Functionally, could be involved in insertion of integral membrane proteins into the membrane. The protein is Putative membrane protein insertion efficiency factor of Nitratidesulfovibrio vulgaris (strain DSM 19637 / Miyazaki F) (Desulfovibrio vulgaris).